A 724-amino-acid chain; its full sequence is Acyl-coenzyme A oxidase 2 (724 aa).

The segment at 1–48 (MAMLSQPNDGHDHPEKKDPDTTPKQVAGVISSQDPPHPAKDVAEERAR) is disordered. 2 stretches are compositionally biased toward basic and acidic residues: residues 9–21 (DGHDHPEKKDPDT) and 37–48 (HPAKDVAEERAR).

It belongs to the acyl-CoA oxidase family. FAD serves as cofactor.

It localises to the peroxisome. The catalysed reaction is a 2,3-saturated acyl-CoA + O2 = a (2E)-enoyl-CoA + H2O2. Its pathway is lipid metabolism; peroxisomal fatty acid beta-oxidation. The sequence is that of Acyl-coenzyme A oxidase 2 (POX2) from Candida tropicalis (Yeast).